We begin with the raw amino-acid sequence, 110 residues long: MADPWNRGHGAVDDMLDAENKRMAENLASKVSRLKSLAYDIDKDAEEQNAYLDGMDSNFLSATGLLTGSVKRFSTMVRSGRDNRKILCYVSVGLVVAFFLLYYLVSRMQN.

Residues 1–85 (MADPWNRGHG…MVRSGRDNRK (85 aa)) lie on the Cytoplasmic side of the membrane. Residues 14 to 76 (DMLDAENKRM…TGSVKRFSTM (63 aa)) form the t-SNARE coiled-coil homology domain. A helical; Anchor for type IV membrane protein membrane pass occupies residues 86 to 106 (ILCYVSVGLVVAFFLLYYLVS). Residues 107-110 (RMQN) lie on the Lumenal side of the membrane.

Component of a SNARE complex consisting of stx5, ykt6, gosr2 and bet1l.

Its subcellular location is the golgi apparatus membrane. In terms of biological role, vesicle SNARE required for targeting and fusion of retrograde transport vesicles with the Golgi complex. Required for the integrity of the Golgi complex. The protein is BET1-like protein (bet1l) of Danio rerio (Zebrafish).